A 225-amino-acid polypeptide reads, in one-letter code: Ribonuclease 3 (225 aa).

An RNase III domain is found at 7–129 (IPRLCRTLGY…IIGAIYLDSD (123 aa)). Residue glutamate 42 participates in Mg(2+) binding. The active site involves aspartate 46. Positions 115 and 118 each coordinate Mg(2+). Residue glutamate 118 is part of the active site. The DRBM domain occupies 155-225 (DPKTLLQEHL…AAQVLELIKK (71 aa)).

Belongs to the ribonuclease III family. Homodimer. Mg(2+) is required as a cofactor.

The protein localises to the cytoplasm. It carries out the reaction Endonucleolytic cleavage to 5'-phosphomonoester.. Functionally, digests double-stranded RNA. Involved in the processing of primary rRNA transcript to yield the immediate precursors to the large and small rRNAs (23S and 16S). Processes some mRNAs, and tRNAs when they are encoded in the rRNA operon. Processes pre-crRNA and tracrRNA of type II CRISPR loci if present in the organism. This chain is Ribonuclease 3, found in Shewanella piezotolerans (strain WP3 / JCM 13877).